Here is a 284-residue protein sequence, read N- to C-terminus: 1D-myo-inositol 2-acetamido-2-deoxy-alpha-D-glucopyranoside deacetylase (284 aa).

The Zn(2+) site is built by histidine 12, aspartate 15, and histidine 146.

This sequence belongs to the MshB deacetylase family. It depends on Zn(2+) as a cofactor.

It catalyses the reaction 1D-myo-inositol 2-acetamido-2-deoxy-alpha-D-glucopyranoside + H2O = 1D-myo-inositol 2-amino-2-deoxy-alpha-D-glucopyranoside + acetate. In terms of biological role, catalyzes the deacetylation of 1D-myo-inositol 2-acetamido-2-deoxy-alpha-D-glucopyranoside (GlcNAc-Ins) in the mycothiol biosynthesis pathway. This chain is 1D-myo-inositol 2-acetamido-2-deoxy-alpha-D-glucopyranoside deacetylase, found in Mycolicibacterium vanbaalenii (strain DSM 7251 / JCM 13017 / BCRC 16820 / KCTC 9966 / NRRL B-24157 / PYR-1) (Mycobacterium vanbaalenii).